The chain runs to 497 residues: IWS1-like protein (497 aa).

A disordered region spans residues Met1–Glu191. Low complexity-rich tracts occupy residues Ala7–Pro23 and Pro47–Arg57. 3 stretches are compositionally biased toward basic and acidic residues: residues Glu123–Phe134, Asp144–Asp160, and Pro181–Glu191. One can recognise a TFIIS N-terminal domain in the interval Ser281–Leu361. The interval Ser369 to Arg433 is disordered. 2 stretches are compositionally biased toward basic and acidic residues: residues Arg370–Pro382 and Ala401–Glu411.

This sequence belongs to the IWS1 family.

Its subcellular location is the nucleus. This Caenorhabditis briggsae protein is IWS1-like protein.